Reading from the N-terminus, the 344-residue chain is FCS-Like Zinc finger 10 (344 aa).

The FLZ-type zinc finger occupies Asp-270 to Glu-314. Acidic residues predominate over residues Leu-309–Glu-320. The disordered stretch occupies residues Leu-309–Gly-344.

The protein belongs to the FLZ family. In terms of assembly, interacts with KIN10 and KIN11 via its FLZ-type zinc finger domain. Interacts with KINB1, KINB2 and KINB3 via its N-terminal part. Forms homodimer and heterodimer with FLZ2 and FLZ12 in vitro. As to expression, early expressed in hypocotyl and cotyledon and preferentially in the stelar region of the shoot and root. Later expressed in root-shoot junction, lateral root, old or senescing leaves and in pistil and pollen of flower buds or open flowers.

The protein localises to the cytoplasm. Its subcellular location is the nucleus. It is found in the endoplasmic reticulum. May act as an adapter to facilitate the interaction of SnRK1 complex with effector proteins, conferring tissue- and stimulus-type specific differences in the SnRK1 regulation pathway. Negatively regulates KIN10 leading to a repression of the SnRK1 signaling pathway. In Arabidopsis thaliana (Mouse-ear cress), this protein is FCS-Like Zinc finger 10.